A 485-amino-acid polypeptide reads, in one-letter code: Glutamyl-tRNA(Gln) amidotransferase subunit A (485 aa).

Residues K78 and S153 each act as charge relay system in the active site. The active-site Acyl-ester intermediate is S177.

It belongs to the amidase family. GatA subfamily. As to quaternary structure, heterotrimer of A, B and C subunits.

The catalysed reaction is L-glutamyl-tRNA(Gln) + L-glutamine + ATP + H2O = L-glutaminyl-tRNA(Gln) + L-glutamate + ADP + phosphate + H(+). Functionally, allows the formation of correctly charged Gln-tRNA(Gln) through the transamidation of misacylated Glu-tRNA(Gln) in organisms which lack glutaminyl-tRNA synthetase. The reaction takes place in the presence of glutamine and ATP through an activated gamma-phospho-Glu-tRNA(Gln). This Geobacter sulfurreducens (strain ATCC 51573 / DSM 12127 / PCA) protein is Glutamyl-tRNA(Gln) amidotransferase subunit A.